A 122-amino-acid chain; its full sequence is Large ribosomal subunit protein uL18 (122 aa).

The protein belongs to the universal ribosomal protein uL18 family. Part of the 50S ribosomal subunit; part of the 5S rRNA/L5/L18/L25 subcomplex. Contacts the 5S and 23S rRNAs.

In terms of biological role, this is one of the proteins that bind and probably mediate the attachment of the 5S RNA into the large ribosomal subunit, where it forms part of the central protuberance. In Petrotoga mobilis (strain DSM 10674 / SJ95), this protein is Large ribosomal subunit protein uL18.